Here is a 550-residue protein sequence, read N- to C-terminus: Nucleoside hydrolase 4 (550 aa).

The protein belongs to the IUNH family.

Its subcellular location is the cytoplasm. In terms of biological role, may be involved in the degradation of nucleosides. In Arabidopsis thaliana (Mouse-ear cress), this protein is Nucleoside hydrolase 4.